Reading from the N-terminus, the 132-residue chain is uncharacterized protein (132 aa).

The first 18 residues, M1–A18, serve as a signal peptide directing secretion.

This is an uncharacterized protein from Aquifex aeolicus (strain VF5).